A 316-amino-acid polypeptide reads, in one-letter code: Serpentine receptor class gamma-8 (316 aa).

The next 7 membrane-spanning stretches (helical) occupy residues 28 to 48, 60 to 80, 106 to 126, 147 to 167, 186 to 206, 235 to 255, and 267 to 287; these read FVQVAYLAPAVFLYSRILYVV, PFFMVYSMVGLILVLLDIFIT, LYYPLLNYLHCAQPFIQIFLT, FSRILILNLIAPFFFIWNTII, IIPWASMSLFLFIIRSAVVMI, ACAANSICFLVPAVFEAMKVL, and LVQPFAWDVLNVGSPLVMIFA.

It belongs to the nematode receptor-like protein srg family.

It is found in the membrane. The sequence is that of Serpentine receptor class gamma-8 (srg-8) from Caenorhabditis elegans.